Consider the following 225-residue polypeptide: Rho GDP-dissociation inhibitor 3 (225 aa).

This sequence belongs to the Rho GDI family. As to expression, primarily expressed in pancreas and brain.

The protein resides in the cytoplasm. In terms of biological role, inhibits GDP/GTP exchange reaction of RhoB. Interacts specifically with the GDP- and GTP-bound forms of post-translationally processed Rhob and Rhog proteins, both of which show a growth-regulated expression in mammalian cells. Stimulates the release of the GDP-bound but not the GTP-bound RhoB protein. Also inhibits the GDP/GTP exchange of RhoB but shows less ability to inhibit the dissociation of prebound GTP. The sequence is that of Rho GDP-dissociation inhibitor 3 (ARHGDIG) from Homo sapiens (Human).